The sequence spans 321 residues: Olfactory receptor 5K3 (321 aa).

At 1 to 25 the chain is on the extracellular side; the sequence is MNKENHSLIAEFILTGFTYHPKLKT. N-linked (GlcNAc...) asparagine glycosylation occurs at Asn-5. The chain crosses the membrane as a helical span at residues 26–46; the sequence is VLFVVFFAIYLITMVGNIGLV. The Cytoplasmic portion of the chain corresponds to 47–56; that stretch reads ALIYIEQRLH. Residues 57 to 77 traverse the membrane as a helical segment; sequence TPMYIFLGNLVLMDSCCSSAI. The Extracellular portion of the chain corresponds to 78–97; that stretch reads TPKMLENFFSEDKRITLYEC. Cys-97 and Cys-179 are oxidised to a cystine. A helical transmembrane segment spans residues 98 to 118; sequence MAQFYFLCLAETTDCFLLAAM. Over 119–143 the chain is Cytoplasmic; it reads AYDCYVAICNPLQYHTMMSKTLCIQ. Residues 144 to 164 form a helical membrane-spanning segment; it reads MTAGAYLAGNLHPMIEVEFLL. Topologically, residues 165 to 196 are extracellular; sequence RLTFCGSHQINHFFCDVLPLYRLSCINPYINE. Residues 197–217 form a helical membrane-spanning segment; sequence LVLFILAGSIQIFTIVLVSYF. Residues 218-235 lie on the Cytoplasmic side of the membrane; it reads YILFTIFTMKSKEGRGKA. A helical transmembrane segment spans residues 236–256; it reads LSTCASHFLSVSIFCDSLLFM. At 257-269 the chain is on the extracellular side; sequence YARPGAVNEGDKD. Residues 270 to 290 traverse the membrane as a helical segment; it reads IPVAIFYTLVIPLLNPFIYSL. Residues 291-321 lie on the Cytoplasmic side of the membrane; that stretch reads RNKEVINIMKKIMKKRKFCHILKQMSSPLAT.

It belongs to the G-protein coupled receptor 1 family.

Its subcellular location is the cell membrane. Its function is as follows. Odorant receptor. In Homo sapiens (Human), this protein is Olfactory receptor 5K3 (OR5K3).